Here is a 265-residue protein sequence, read N- to C-terminus: Eukaryotic translation initiation factor 3 subunit J (265 aa).

Acidic residues-rich tracts occupy residues 1-12 (MAPERWDDEEDS) and 26-44 (DEEEDEVLDSWDAAEDSEV). Disordered stretches follow at residues 1–113 (MAPE…DADL) and 212–265 (TMSN…DDFM). Composition is skewed to basic and acidic residues over residues 45 to 65 (EREKAAKAAEAKAKADAEAAA) and 73 to 86 (RIQEHKEERKKKAE). The stretch at 61–95 (AEAAAKKKSKSQRIQEHKEERKKKAEEEDSDSEEE) forms a coiled coil. Acidic residues predominate over residues 87-97 (EEDSDSEEEDD). Over residues 216-228 (EKMREERAADKGS) the composition is skewed to basic and acidic residues. The segment covering 251 to 265 (DYDNGDDGLGDDDFM) has biased composition (acidic residues).

This sequence belongs to the eIF-3 subunit J family. In terms of assembly, component of the eukaryotic translation initiation factor 3 (eIF-3) complex.

The protein localises to the cytoplasm. Component of the eukaryotic translation initiation factor 3 (eIF-3) complex, which is involved in protein synthesis of a specialized repertoire of mRNAs and, together with other initiation factors, stimulates binding of mRNA and methionyl-tRNAi to the 40S ribosome. The eIF-3 complex specifically targets and initiates translation of a subset of mRNAs involved in cell proliferation. The sequence is that of Eukaryotic translation initiation factor 3 subunit J (hcr1) from Aspergillus oryzae (strain ATCC 42149 / RIB 40) (Yellow koji mold).